The chain runs to 253 residues: Tryptophan synthase alpha chain (253 aa).

Residues Glu-46 and Asp-57 each act as proton acceptor in the active site.

It belongs to the TrpA family. Tetramer of two alpha and two beta chains.

The catalysed reaction is (1S,2R)-1-C-(indol-3-yl)glycerol 3-phosphate + L-serine = D-glyceraldehyde 3-phosphate + L-tryptophan + H2O. Its pathway is amino-acid biosynthesis; L-tryptophan biosynthesis; L-tryptophan from chorismate: step 5/5. The alpha subunit is responsible for the aldol cleavage of indoleglycerol phosphate to indole and glyceraldehyde 3-phosphate. The protein is Tryptophan synthase alpha chain of Dictyoglomus thermophilum (strain ATCC 35947 / DSM 3960 / H-6-12).